A 534-amino-acid chain; its full sequence is H(+)/hexose cotransporter 1 (534 aa).

Residues 1 to 21 (MAGGGVVVVSGRGLSTGDYRG) lie on the Cytoplasmic side of the membrane. Residues 22–42 (GLTVYVVMVAFMAACGGLLLG) form a helical membrane-spanning segment. Over 43-87 (YDNGVTGGVVSLEAFEKKFFPDVWAKKQEVHEDSPYCTYDNAKLQ) the chain is Extracellular. A helical membrane pass occupies residues 88–108 (LFVSSLFLAGLVSCLFASWIT). The Cytoplasmic portion of the chain corresponds to 109–114 (RNWGRK). Residues 115 to 135 (VTMGIGGAFFVAGGLVNAFAQ) traverse the membrane as a helical segment. The Extracellular portion of the chain corresponds to 136–144 (DMAMLIVGR). The chain crosses the membrane as a helical span at residues 145–165 (VLLGFGVGLGSQVVPQYLSEV). Residues 166–173 (APFSHRGM) lie on the Cytoplasmic side of the membrane. The helical transmembrane segment at 174-194 (LNIGYQLFVTIGILIAGLVNY) threads the bilayer. Residues 195 to 204 (AVRDWENGWR) are Extracellular-facing. The chain crosses the membrane as a helical span at residues 205–225 (LSLGPAAAPGAILFLGSLVLP). Topologically, residues 226 to 299 (ESPNFLVEKG…TSFVIQFFQQ (74 aa)) are cytoplasmic. A helical membrane pass occupies residues 300-322 (FTGINAIIFYVPVLFSSLGSANS). The Extracellular segment spans residues 323–328 (AALLNT). Residues 329-349 (VVVGAVNVGSTLIAVMFSDKF) traverse the membrane as a helical segment. The Cytoplasmic portion of the chain corresponds to 350–352 (GRR). The helical transmembrane segment at 353–373 (FLLIEGGIQCCLAMLTTGVVL) threads the bilayer. Over 374–387 (AIEFAKYGTDPLPK) the chain is Extracellular. Residues 388 to 408 (AVASGILAVICIFISGFAWSW) form a helical membrane-spanning segment. The Cytoplasmic portion of the chain corresponds to 409-433 (GPMGWLIPSEIFTLETRPAGTAVAV). A helical transmembrane segment spans residues 434 to 454 (VGNFLFSFVIGQAFVSMLCAM). Topologically, residues 455–456 (EY) are extracellular. The chain crosses the membrane as a helical span at residues 457–477 (GVFLFFAGWLVIMVLCAIFLL). Topologically, residues 478-534 (PETKGVPIERVQALYARHWFWNRVMGPAAAEVIAEDEKRVAAASAIIKEEELSKAMK) are cytoplasmic.

This sequence belongs to the major facilitator superfamily. Sugar transporter (TC 2.A.1.1) family.

Its subcellular location is the membrane. In terms of biological role, active uptake of hexoses. The chain is H(+)/hexose cotransporter 1 (HUP1) from Parachlorella kessleri (Green alga).